The chain runs to 424 residues: uncharacterized protein (424 aa).

Residue lysine 259 is modified to N6-(pyridoxal phosphate)lysine.

The protein belongs to the class-III pyridoxal-phosphate-dependent aminotransferase family. It depends on pyridoxal 5'-phosphate as a cofactor.

This is an uncharacterized protein from Archaeoglobus fulgidus (strain ATCC 49558 / DSM 4304 / JCM 9628 / NBRC 100126 / VC-16).